The chain runs to 629 residues: Filament-like plant protein 2 (629 aa).

Coiled coils occupy residues 34–61 (WEKA…LEDR) and 102–171 (NTGL…LEAE). Residues 186–205 (SSNQSVDSHSDGGRERVEGS) form a disordered region. The segment covering 193–203 (SHSDGGRERVE) has biased composition (basic and acidic residues). A coiled-coil region spans residues 270–493 (ELSLMEKLEK…IEEKTMIKRE (224 aa)).

It belongs to the FPP family. Interacts with WPP/MAF proteins. Binds to COG2; this interaction promotes the association between cortical microtubules and EXO70A1. As to expression, accumulates in preferentially xylem cells.

The protein resides in the vesicle. Ensures, when in complex with FPP3/VETH1 and COG2, the correct secondary cell wall (SCW) deposition pattern by recruiting exocyst components to cortical microtubules in xylem cells during secondary cell wall deposition by recruiting EXO70A1. This is Filament-like plant protein 2 from Arabidopsis thaliana (Mouse-ear cress).